A 230-amino-acid polypeptide reads, in one-letter code: 2,3-bisphosphoglycerate-dependent phosphoglycerate mutase (230 aa).

Substrate-binding positions include 8–15 (RHGESEWN), 21–22 (TG), Arg-60, 87–90 (ERHY), Lys-98, 114–115 (RR), and 183–184 (GN). His-9 serves as the catalytic Tele-phosphohistidine intermediate. Catalysis depends on Glu-87, which acts as the Proton donor/acceptor.

This sequence belongs to the phosphoglycerate mutase family. BPG-dependent PGAM subfamily.

The enzyme catalyses (2R)-2-phosphoglycerate = (2R)-3-phosphoglycerate. The protein operates within carbohydrate degradation; glycolysis; pyruvate from D-glyceraldehyde 3-phosphate: step 3/5. Catalyzes the interconversion of 2-phosphoglycerate and 3-phosphoglycerate. This chain is 2,3-bisphosphoglycerate-dependent phosphoglycerate mutase, found in Streptococcus uberis (strain ATCC BAA-854 / 0140J).